We begin with the raw amino-acid sequence, 304 residues long: Protein pxr1 (304 aa).

A compositionally biased stretch (basic residues) spans 1–11 (MGLAAPRKKTK). Disordered regions lie at residues 1–25 (MGLA…SRST), 144–238 (NATA…DTET), and 256–276 (TSLL…MGRR). Residues 15 to 25 (DPNNTSWSRST) are compositionally biased toward polar residues. Positions 25 to 79 (TDGFGHRILKAQGWTPGDFLGARNATHSDLFTTASASHIRVVLKDDTLGLGARPK) constitute a G-patch domain. 2 stretches are compositionally biased toward basic and acidic residues: residues 154-170 (LRVD…HENG) and 204-238 (GKEM…DTET). A compositionally biased stretch (polar residues) spans 256-266 (TSLLASNGPST).

It belongs to the PINX1 family.

Its subcellular location is the nucleus. It is found in the nucleolus. Its function is as follows. Involved in rRNA-processing at A0, A1 and A2 sites and negatively regulates telomerase. The chain is Protein pxr1 (pxr1) from Aspergillus fumigatus (strain ATCC MYA-4609 / CBS 101355 / FGSC A1100 / Af293) (Neosartorya fumigata).